A 985-amino-acid polypeptide reads, in one-letter code: Alanine--tRNA ligase, mitochondrial (985 aa).

Residues 1-23 (MAASVAAAARRLRRAIRRSPAWR) constitute a mitochondrion transit peptide. Residues arginine 110, histidine 128, tryptophan 210, and 240 to 242 (LWN) each bind ATP. L-alanine-binding residues include asparagine 242 and aspartate 265. Glycine 269 contributes to the ATP binding site. Zn(2+) contacts are provided by histidine 632, histidine 636, cysteine 749, and histidine 753.

It belongs to the class-II aminoacyl-tRNA synthetase family. As to quaternary structure, monomer. The cofactor is Zn(2+).

The protein localises to the mitochondrion. The catalysed reaction is tRNA(Ala) + L-alanine + ATP = L-alanyl-tRNA(Ala) + AMP + diphosphate. It carries out the reaction (S)-lactate + ATP + H(+) = (S)-lactoyl-AMP + diphosphate. It catalyses the reaction (S)-lactoyl-AMP + L-lysyl-[protein] = N(6)-[(S)-lactoyl]-L-lysyl-[protein] + AMP + 2 H(+). Functionally, catalyzes the attachment of alanine to tRNA(Ala) in a two-step reaction: alanine is first activated by ATP to form Ala-AMP and then transferred to the acceptor end of tRNA(Ala). Also edits incorrectly charged tRNA(Ala) via its editing domain. In presence of high levels of lactate, also acts as a protein lactyltransferase that mediates lactylation of lysine residues in target proteins, such as CGAS. Acts as an inhibitor of cGAS/STING signaling by catalyzing lactylation of CGAS, preventing the formation of liquid-like droplets in which CGAS is activated. In Homo sapiens (Human), this protein is Alanine--tRNA ligase, mitochondrial.